Here is a 924-residue protein sequence, read N- to C-terminus: Periplasmic nitrate reductase (924 aa).

The tat-type signal signal peptide spans 1–30; it reads MNRRDFIKNTAIASAASVAGLSVPSSMLGA. A 4Fe-4S Mo/W bis-MGD-type domain is found at 35 to 91; it reads WKWDKAVCRFCGTGCGIMIARKDGKIVATKGDPAAPVNRGLNCIKGYFNAKIMYGED. Positions 42, 45, 49, and 77 each coordinate [4Fe-4S] cluster. Mo-bis(molybdopterin guanine dinucleotide) is bound by residues Lys79, Gln147, Asn172, Cys176, 209–216, Met417, Gln421, Asn527, 552–553, Lys575, Asp602, and 814–823; these read WGANMAEM, SD, and TGRVLEHWHS. Substrate is bound at residue Trp890. Mo-bis(molybdopterin guanine dinucleotide) is bound by residues Asn898 and Lys915.

This sequence belongs to the prokaryotic molybdopterin-containing oxidoreductase family. NasA/NapA/NarB subfamily. As to quaternary structure, component of the periplasmic nitrate reductase NapAB complex composed of NapA and NapB. The cofactor is [4Fe-4S] cluster. Mo-bis(molybdopterin guanine dinucleotide) serves as cofactor. Post-translationally, predicted to be exported by the Tat system. The position of the signal peptide cleavage has not been experimentally proven.

Its subcellular location is the periplasm. The catalysed reaction is 2 Fe(II)-[cytochrome] + nitrate + 2 H(+) = 2 Fe(III)-[cytochrome] + nitrite + H2O. Its function is as follows. Catalytic subunit of the periplasmic nitrate reductase complex NapAB. Receives electrons from NapB and catalyzes the reduction of nitrate to nitrite. This Campylobacter jejuni subsp. jejuni serotype O:6 (strain 81116 / NCTC 11828) protein is Periplasmic nitrate reductase.